A 361-amino-acid chain; its full sequence is Phospho-N-acetylmuramoyl-pentapeptide-transferase (361 aa).

10 helical membrane passes run Leu28–Leu48, Thr74–Leu94, Ile99–Ala119, Leu135–Ser155, Ser167–Ala187, Val203–Ile223, Thr236–Phe256, Val263–Ile283, Ile288–Val308, and Lys338–Leu358.

Belongs to the glycosyltransferase 4 family. MraY subfamily. It depends on Mg(2+) as a cofactor.

The protein localises to the cell inner membrane. It catalyses the reaction UDP-N-acetyl-alpha-D-muramoyl-L-alanyl-gamma-D-glutamyl-meso-2,6-diaminopimeloyl-D-alanyl-D-alanine + di-trans,octa-cis-undecaprenyl phosphate = di-trans,octa-cis-undecaprenyl diphospho-N-acetyl-alpha-D-muramoyl-L-alanyl-D-glutamyl-meso-2,6-diaminopimeloyl-D-alanyl-D-alanine + UMP. It participates in cell wall biogenesis; peptidoglycan biosynthesis. In terms of biological role, catalyzes the initial step of the lipid cycle reactions in the biosynthesis of the cell wall peptidoglycan: transfers peptidoglycan precursor phospho-MurNAc-pentapeptide from UDP-MurNAc-pentapeptide onto the lipid carrier undecaprenyl phosphate, yielding undecaprenyl-pyrophosphoryl-MurNAc-pentapeptide, known as lipid I. The sequence is that of Phospho-N-acetylmuramoyl-pentapeptide-transferase from Rickettsia bellii (strain RML369-C).